The sequence spans 140 residues: ATP synthase epsilon chain (140 aa).

Belongs to the ATPase epsilon chain family. In terms of assembly, F-type ATPases have 2 components, CF(1) - the catalytic core - and CF(0) - the membrane proton channel. CF(1) has five subunits: alpha(3), beta(3), gamma(1), delta(1), epsilon(1). CF(0) has three main subunits: a, b and c.

The protein resides in the cell inner membrane. Produces ATP from ADP in the presence of a proton gradient across the membrane. The sequence is that of ATP synthase epsilon chain from Colwellia psychrerythraea (strain 34H / ATCC BAA-681) (Vibrio psychroerythus).